Reading from the N-terminus, the 312-residue chain is Olfactory receptor 4F15 (312 aa).

At 1-25 (MNGMNHSVVSEFVFMGLTNSREIQL) the chain is on the extracellular side. A glycan (N-linked (GlcNAc...) asparagine) is linked at Asn-5. A helical membrane pass occupies residues 26 to 49 (LLFVFSLLFYFASMMGNLVIVFTV). The Cytoplasmic segment spans residues 50-57 (TMDAHLHS). The helical transmembrane segment at 58–79 (PMYFLLANLSIIDMAFCSITAP) threads the bilayer. The Extracellular segment spans residues 80-100 (KMICDIFKKHKAISFRGCITQ). Residues Cys-97 and Cys-189 are joined by a disulfide bond. The helical transmembrane segment at 101 to 120 (IFFSHALGGTEMVLLIAMAF) threads the bilayer. Topologically, residues 121-139 (DRYMAICKPLHYLTIMSPR) are cytoplasmic. A helical membrane pass occupies residues 140 to 158 (MCLYFLATSSIIGLIHSLV). Topologically, residues 159–195 (QLVFVVDLPFCGPNIFDSFYCDLPRLLRLACTNTQEL) are extracellular. Residues 196 to 219 (EFMVTVNSGLISVGSFVLLVISYI) traverse the membrane as a helical segment. Topologically, residues 220–235 (FILFTVWKHSSGGLAK) are cytoplasmic. The chain crosses the membrane as a helical span at residues 236-258 (ALSTLSAHVTVVILFFGPLMFFY). The Extracellular segment spans residues 259–269 (TWPSPTSHLDK). Residues 270–289 (YLAIFDAFITPFLNPVIYTF) form a helical membrane-spanning segment. The Cytoplasmic segment spans residues 290 to 312 (RNKDMKVAMRRLCSRLAHFTKIL).

The protein belongs to the G-protein coupled receptor 1 family.

The protein localises to the cell membrane. Functionally, odorant receptor. The polypeptide is Olfactory receptor 4F15 (OR4F15) (Homo sapiens (Human)).